The following is a 97-amino-acid chain: Small ribosomal subunit protein bS20c (97 aa).

Over residues Met-1–Leu-15 the composition is skewed to polar residues. Residues Met-1–Lys-20 form a disordered region.

Belongs to the bacterial ribosomal protein bS20 family.

Its subcellular location is the plastid. It is found in the chloroplast. Its function is as follows. Binds directly to 16S ribosomal RNA. This is Small ribosomal subunit protein bS20c from Gracilaria tenuistipitata var. liui (Red alga).